We begin with the raw amino-acid sequence, 137 residues long: Secreted RxLR effector protein 67 (137 aa).

A signal peptide spans 1–18; that stretch reads MRLYILVLAAIAVTLVFA. The short motif at 32–61 is the RxLR-dEER element; sequence RALRQASITDEKSDDSLNAQAPPLSKSEKR. Positions 40–65 are disordered; the sequence is TDEKSDDSLNAQAPPLSKSEKRLSRS. The helical transmembrane segment at 114-134 threads the bilayer; the sequence is WFVRMILEAGIFWAVFHCLSA.

Belongs to the RxLR effector family.

It localises to the secreted. The protein resides in the host cytoplasm. It is found in the host nucleus. Its subcellular location is the membrane. Its function is as follows. Effector that partially suppresses the tobacco programmed cell death induced by cell death-inducing proteins. The sequence is that of Secreted RxLR effector protein 67 from Plasmopara viticola (Downy mildew of grapevine).